The primary structure comprises 163 residues: Transcription elongation factor GreA (163 aa).

Positions 11–38 (FKQLEKELDRLKKERPGVIQAIKEAREE) form a coiled coil.

The protein belongs to the GreA/GreB family.

Functionally, necessary for efficient RNA polymerase transcription elongation past template-encoded arresting sites. The arresting sites in DNA have the property of trapping a certain fraction of elongating RNA polymerases that pass through, resulting in locked ternary complexes. Cleavage of the nascent transcript by cleavage factors such as GreA or GreB allows the resumption of elongation from the new 3'terminus. GreA releases sequences of 2 to 3 nucleotides. This chain is Transcription elongation factor GreA, found in Nitratidesulfovibrio vulgaris (strain ATCC 29579 / DSM 644 / CCUG 34227 / NCIMB 8303 / VKM B-1760 / Hildenborough) (Desulfovibrio vulgaris).